A 207-amino-acid chain; its full sequence is Dephospho-CoA kinase (207 aa).

The 198-residue stretch at 10-207 (ILGLTGGIGS…FYLTLRGGQS (198 aa)) folds into the DPCK domain. Residue 18–23 (GSGKSA) participates in ATP binding.

The protein belongs to the CoaE family.

It localises to the cytoplasm. The enzyme catalyses 3'-dephospho-CoA + ATP = ADP + CoA + H(+). It functions in the pathway cofactor biosynthesis; coenzyme A biosynthesis; CoA from (R)-pantothenate: step 5/5. Its function is as follows. Catalyzes the phosphorylation of the 3'-hydroxyl group of dephosphocoenzyme A to form coenzyme A. The sequence is that of Dephospho-CoA kinase from Pseudomonas syringae pv. tomato (strain ATCC BAA-871 / DC3000).